The following is a 136-amino-acid chain: Classical arabinogalactan protein 11 (136 aa).

The first 20 residues, Met-1–Ala-20, serve as a signal peptide directing secretion. 3 stretches are compositionally biased toward low complexity: residues Pro-24–Pro-56, Ser-68–Val-81, and Pro-89–Ala-107. The tract at residues Pro-24 to Thr-115 is disordered. Ser-112 is lipidated: GPI-anchor amidated serine. Residues Gly-113–Leu-136 constitute a propeptide, removed in mature form.

The protein belongs to the classical AGP family. In terms of processing, O-glycosylated on the hydroxyproline residues.

Its subcellular location is the cell membrane. Its function is as follows. Proteoglycan that seems to be implicated in diverse developmental roles such as differentiation, cell-cell recognition, embryogenesis and programmed cell death. In Arabidopsis thaliana (Mouse-ear cress), this protein is Classical arabinogalactan protein 11 (AGP11).